Reading from the N-terminus, the 106-residue chain is Cyclin-dependent protein kinase inhibitor SMR15 (106 aa).

Probable cyclin-dependent protein kinase (CDK) inhibitor that functions as a repressor of mitosis in the endoreduplication cell cycle. The polypeptide is Cyclin-dependent protein kinase inhibitor SMR15 (Arabidopsis thaliana (Mouse-ear cress)).